The primary structure comprises 406 residues: Phosphopentomutase (406 aa).

Mn(2+)-binding residues include Asp10, Asp305, His310, Asp346, His347, and His358.

It belongs to the phosphopentomutase family. It depends on Mn(2+) as a cofactor.

The protein resides in the cytoplasm. The enzyme catalyses 2-deoxy-alpha-D-ribose 1-phosphate = 2-deoxy-D-ribose 5-phosphate. The catalysed reaction is alpha-D-ribose 1-phosphate = D-ribose 5-phosphate. Its pathway is carbohydrate degradation; 2-deoxy-D-ribose 1-phosphate degradation; D-glyceraldehyde 3-phosphate and acetaldehyde from 2-deoxy-alpha-D-ribose 1-phosphate: step 1/2. In terms of biological role, isomerase that catalyzes the conversion of deoxy-ribose 1-phosphate (dRib-1-P) and ribose 1-phosphate (Rib-1-P) to deoxy-ribose 5-phosphate (dRib-5-P) and ribose 5-phosphate (Rib-5-P), respectively. This Agrobacterium fabrum (strain C58 / ATCC 33970) (Agrobacterium tumefaciens (strain C58)) protein is Phosphopentomutase.